The following is a 73-amino-acid chain: UPF0435 protein lin1819 (73 aa).

Belongs to the UPF0435 family.

In Listeria innocua serovar 6a (strain ATCC BAA-680 / CLIP 11262), this protein is UPF0435 protein lin1819.